The sequence spans 377 residues: Actin-related protein T2 (377 aa).

Belongs to the actin family.

It localises to the cytoplasm. It is found in the cytoskeleton. The sequence is that of Actin-related protein T2 (ACTRT2) from Bos taurus (Bovine).